Consider the following 1075-residue polypeptide: DNA-directed RNA polymerase subunit beta (1075 aa).

Belongs to the RNA polymerase beta chain family. In plastids the minimal PEP RNA polymerase catalytic core is composed of four subunits: alpha, beta, beta', and beta''. When a (nuclear-encoded) sigma factor is associated with the core the holoenzyme is formed, which can initiate transcription.

It localises to the plastid. The protein resides in the chloroplast. The catalysed reaction is RNA(n) + a ribonucleoside 5'-triphosphate = RNA(n+1) + diphosphate. Functionally, DNA-dependent RNA polymerase catalyzes the transcription of DNA into RNA using the four ribonucleoside triphosphates as substrates. This Pinus thunbergii (Japanese black pine) protein is DNA-directed RNA polymerase subunit beta.